The primary structure comprises 231 residues: MSRRKSPDSPLFQLEPVLPDFSFEITAKRDGFWPVAGADEAGRGPLAGPVVAAAVILDPDAVPGGLNDSKLLTAEQREALFTEIMATATVSIASSSAAHIDATDILKASLDAMRRAIDGLSIAARFALIDGRDVPQGLPCHAKAIVKGDSRSVSIAAASIVAKVTRDRMMARADATFPAYGFALHAGYATVRHRSAIDSHGPCSLHRMSFRPFREAQEQPLAVSTGPIDPN.

Positions 33–222 constitute an RNase H type-2 domain; the sequence is WPVAGADEAG…FREAQEQPLA (190 aa). 3 residues coordinate a divalent metal cation: aspartate 39, glutamate 40, and aspartate 130.

The protein belongs to the RNase HII family. Mn(2+) serves as cofactor. Mg(2+) is required as a cofactor.

Its subcellular location is the cytoplasm. The enzyme catalyses Endonucleolytic cleavage to 5'-phosphomonoester.. In terms of biological role, endonuclease that specifically degrades the RNA of RNA-DNA hybrids. This Sinorhizobium fredii (strain NBRC 101917 / NGR234) protein is Ribonuclease HII.